Reading from the N-terminus, the 253-residue chain is Methionine aminopeptidase A (253 aa).

Residue His-80 coordinates substrate. Positions 98, 109, and 172 each coordinate a divalent metal cation. His-179 provides a ligand contact to substrate. Glu-205 and Glu-236 together coordinate a divalent metal cation.

This sequence belongs to the peptidase M24A family. Methionine aminopeptidase type 1 subfamily. In terms of assembly, monomer. The cofactor is Co(2+). Zn(2+) serves as cofactor. Requires Mn(2+) as cofactor. It depends on Fe(2+) as a cofactor.

The catalysed reaction is Release of N-terminal amino acids, preferentially methionine, from peptides and arylamides.. In terms of biological role, removes the N-terminal methionine from nascent proteins. The N-terminal methionine is often cleaved when the second residue in the primary sequence is small and uncharged (Met-Ala-, Cys, Gly, Pro, Ser, Thr, or Val). Requires deformylation of the N(alpha)-formylated initiator methionine before it can be hydrolyzed. This is Methionine aminopeptidase A from Synechocystis sp. (strain ATCC 27184 / PCC 6803 / Kazusa).